Consider the following 704-residue polypeptide: Mannan-binding lectin serine protease 1 (704 aa).

Positions 1–24 (MRFLSFWRLLLYHALCLALPEVSA) are cleaved as a signal peptide. Residues 25–143 (HTVELNEMFG…TGFDAHYMAV (119 aa)) form the CUB 1 domain. Residues 25 to 189 (HTVELNEMFG…HTDNRTCRVE (165 aa)) form a homodimerization region. The tract at residues 25–189 (HTVELNEMFG…HTDNRTCRVE (165 aa)) is interaction with MBL2. The segment at 25–283 (HTVELNEMFG…STQTHSVQIL (259 aa)) is interaction with FCN2. An interaction with MBL1 region spans residues 25-305 (HTVELNEMFG…RLSYRAAGNE (281 aa)). An N-linked (GlcNAc...) asparagine glycan is attached at Asn54. Ca(2+) contacts are provided by Glu73, Asp81, Asp126, Ser128, Asp144, Val145, and Glu147. Cys78 and Cys96 are disulfide-bonded. Positions 144–187 (DVDECKEREDEELSCDHYCHNYIGGYYCSCRFGYILHTDNRTCR) constitute an EGF-like; calcium-binding domain. Cystine bridges form between Cys148–Cys162, Cys158–Cys171, Cys173–Cys186, and Cys190–Cys217. Residues Asn164, Tyr165, and Gly168 each contribute to the Ca(2+) site. Asn164 carries the post-translational modification (3R)-3-hydroxyasparagine. An N-linked (GlcNAc...) asparagine glycan is attached at Asn183. The CUB 2 domain maps to 190-302 (CSGNLFTQRT…RGWRLSYRAA (113 aa)). Ca(2+) is bound by residues Glu240, Asp250, Asp287, and Ser289. Cys247 and Cys265 are oxidised to a cystine. Sushi domains lie at 304–369 (NECP…TCKI) and 370–439 (VDCG…TCLP). Cystine bridges form between Cys306–Cys354, Cys334–Cys367, Cys372–Cys419, Cys402–Cys437, Cys441–Cys577, Cys480–Cys496, Cys619–Cys636, and Cys647–Cys677. 2 N-linked (GlcNAc...) asparagine glycosylation sites follow: Asn390 and Asn412. The region spanning 454–701 (IFNGRPAQKG…NKDWIQRITG (248 aa)) is the Peptidase S1 domain. Active-site charge relay system residues include His495 and Asp557. Ser651 acts as the Charge relay system in catalysis.

It belongs to the peptidase S1 family. In terms of assembly, homodimer. Interacts with the oligomeric lectins MBL2, FCN2 and FCN3; triggers the lectin pathway of complement through activation of C3. Interacts with SERPING1. Interacts with COLEC11; probably triggers the lectin pathway of complement. The iron and 2-oxoglutarate dependent 3-hydroxylation of aspartate and asparagine is (R) stereospecific within EGF domains. In terms of processing, N-glycosylated. Some N-linked glycan are of the complex-type. Post-translationally, autoproteolytic processing of the proenzyme produces the active enzyme composed on the heavy and the light chain held together by a disulfide bond. Isoform 1 but not isoform 2 is activated through autoproteolytic processing. As to expression, protein of the plasma which is primarily expressed by liver.

The protein resides in the secreted. Its activity is regulated as follows. Inhibited by SERPING1 and A2M. Its function is as follows. Functions in the lectin pathway of complement, which performs a key role in innate immunity by recognizing pathogens through patterns of sugar moieties and neutralizing them. The lectin pathway is triggered upon binding of mannan-binding lectin (MBL) and ficolins to sugar moieties which leads to activation of the associated proteases MASP1 and MASP2. Functions as an endopeptidase and may activate MASP2 or C2 or directly activate C3 the key component of complement reaction. Isoform 2 may have an inhibitory effect on the activation of the lectin pathway of complement or may cleave IGFBP5. Also plays a role in development. This Mus musculus (Mouse) protein is Mannan-binding lectin serine protease 1 (Masp1).